A 607-amino-acid chain; its full sequence is MGLTAQPVLDTAPTTNKRLLDWVAEVAELTQPESIYWVDGSEAENTRLTDELVAAGTLTRLNPELFPNSFAGFSDPKDVARVEEQTFICSEKEHDAGFTNNWMEPAEMRTKLSGLFKGSMRGRTMYVIPFVMGHLDAKSPKFGVEITDSAYVVASMRIMARIGTEVLRKIEEPDAFFVPAIHSLGAPLEPGQADVPWPCNDEKWIVHFPESREIWSYGSGYGGNALLGKKCYALRIASVMAHDEGWLAEHMLILKLTSPEQKTYYMAAAFPSACGKTNLALLDPTIKGWKVETLGDDITWMNFDDEGALRAVNPEAGLFGVAPGTGWDTNPNAMRAIAKGNSIFTNVALTDDGGVWWEGMTTETPSHLTDWRGNSWTPDSAEPAAHPNSRFCTPIDQIDMLAPEYNEPDGVPLSAILFGGRRKTTIPLVTQSRDWTNGIFMGSTLSSETTAAAAGAVGVVRRDPMAMLPFIGYDAGDYLKHWVELSKQGDQEKLPKIFLVNWFRRTADGGFAWPGFGDNSRVVTWAIERIEGKADAVETPIGFVPTKESLDLDGLDISDEQLSAALNVDALEWAAEAESIDEWYRRFGGSLPEELLGELEGLKERLG.

Residues Arg-81 and 221–223 each bind substrate; that span reads YGG. Residues Lys-230 and His-250 each coordinate Mn(2+). Ser-272 provides a ligand contact to substrate. Residue 273–278 participates in GTP binding; the sequence is ACGKTN. Cys-274 is a catalytic residue. Asp-297 provides a ligand contact to Mn(2+). Residue 388 to 390 participates in substrate binding; that stretch reads NSR. GTP-binding positions include Arg-390, Arg-421, and 516 to 519; that span reads FGDN.

It belongs to the phosphoenolpyruvate carboxykinase [GTP] family. Monomer. It depends on Mn(2+) as a cofactor.

The protein resides in the cytoplasm. The catalysed reaction is oxaloacetate + GTP = phosphoenolpyruvate + GDP + CO2. The protein operates within carbohydrate biosynthesis; gluconeogenesis. Its function is as follows. Catalyzes the conversion of oxaloacetate (OAA) to phosphoenolpyruvate (PEP), the rate-limiting step in the metabolic pathway that produces glucose from lactate and other precursors derived from the citric acid cycle. This Renibacterium salmoninarum (strain ATCC 33209 / DSM 20767 / JCM 11484 / NBRC 15589 / NCIMB 2235) protein is Phosphoenolpyruvate carboxykinase [GTP].